A 172-amino-acid polypeptide reads, in one-letter code: Small ribosomal subunit protein bS6 (172 aa).

The segment at 100 to 172 is disordered; the sequence is LPAKRVVKTS…ENKEIEKKED (73 aa). The span at 107 to 172 shows a compositional bias: basic and acidic residues; sequence KTSEKNVKED…ENKEIEKKED (66 aa).

This sequence belongs to the bacterial ribosomal protein bS6 family.

Binds together with bS18 to 16S ribosomal RNA. This Prochlorococcus marinus (strain MIT 9211) protein is Small ribosomal subunit protein bS6.